Here is a 225-residue protein sequence, read N- to C-terminus: ATP-dependent dethiobiotin synthetase BioD (225 aa).

12 to 17 is a binding site for ATP; it reads EIGKTY. Thr16 contributes to the Mg(2+) binding site. Lys37 is a catalytic residue. Substrate is bound at residue Ser41. ATP is bound by residues Asp55, 122 to 125, and 182 to 183; these read EGVG and SE. Mg(2+) contacts are provided by Asp55 and Glu122.

Belongs to the dethiobiotin synthetase family. In terms of assembly, homodimer. The cofactor is Mg(2+).

The protein resides in the cytoplasm. It carries out the reaction (7R,8S)-7,8-diammoniononanoate + CO2 + ATP = (4R,5S)-dethiobiotin + ADP + phosphate + 3 H(+). Its pathway is cofactor biosynthesis; biotin biosynthesis; biotin from 7,8-diaminononanoate: step 1/2. Functionally, catalyzes a mechanistically unusual reaction, the ATP-dependent insertion of CO2 between the N7 and N8 nitrogen atoms of 7,8-diaminopelargonic acid (DAPA, also called 7,8-diammoniononanoate) to form a ureido ring. The polypeptide is ATP-dependent dethiobiotin synthetase BioD (Methylobacterium nodulans (strain LMG 21967 / CNCM I-2342 / ORS 2060)).